The primary structure comprises 154 residues: CASP-like protein 5B3 (154 aa).

At 1–17 the chain is on the cytoplasmic side; it reads MKDVVGSPGTWSGMSLR. A helical transmembrane segment spans residues 18 to 38; sequence VSQCVFAGASVVAMASAYGFS. N-linked (GlcNAc...) asparagine glycosylation occurs at Asn39. The Extracellular portion of the chain corresponds to 39 to 42; sequence NYTA. The helical transmembrane segment at 43–63 threads the bilayer; sequence FCYLIASMGLQLLWSFGLACL. At 64-77 the chain is on the cytoplasmic side; the sequence is DIYSLQTKRDLHNP. Residues 78–98 form a helical membrane-spanning segment; that stretch reads VLVSLFVVGDWVTAILSFAAA. Over 99-129 the chain is Extracellular; that stretch reads SASAGVTILFERDVHFCRMYPQLSCGRYELS. A helical membrane pass occupies residues 130–150; the sequence is VILAFITWSFIATSAVSMFWL. Residues 151–154 lie on the Cytoplasmic side of the membrane; sequence LASL.

The protein belongs to the Casparian strip membrane proteins (CASP) family. In terms of assembly, homodimer and heterodimers.

It is found in the cell membrane. This chain is CASP-like protein 5B3, found in Oryza sativa subsp. indica (Rice).